A 513-amino-acid chain; its full sequence is 2-isopropylmalate synthase (513 aa).

One can recognise a Pyruvate carboxyltransferase domain in the interval 5 to 268 (LIIFDTTLRD…EVGIDTTQIV (264 aa)). D14, H202, H204, and N239 together coordinate Mn(2+). The tract at residues 394 to 513 (RLLSLEQQSA…SKNERVAAQG (120 aa)) is regulatory domain.

It belongs to the alpha-IPM synthase/homocitrate synthase family. LeuA type 1 subfamily. Homodimer. Mn(2+) serves as cofactor.

It localises to the cytoplasm. It carries out the reaction 3-methyl-2-oxobutanoate + acetyl-CoA + H2O = (2S)-2-isopropylmalate + CoA + H(+). Its pathway is amino-acid biosynthesis; L-leucine biosynthesis; L-leucine from 3-methyl-2-oxobutanoate: step 1/4. Functionally, catalyzes the condensation of the acetyl group of acetyl-CoA with 3-methyl-2-oxobutanoate (2-ketoisovalerate) to form 3-carboxy-3-hydroxy-4-methylpentanoate (2-isopropylmalate). The polypeptide is 2-isopropylmalate synthase (Methylibium petroleiphilum (strain ATCC BAA-1232 / LMG 22953 / PM1)).